Reading from the N-terminus, the 219-residue chain is MSVKIHYQNTHFITSAPDIRHLPEDEGVEIAFAGRSNAGKSSALNRLTNQKSLAKTSKTPGRTQLINLFKVEEGCHIVDLPGYGFAQVPVEMKNKWQKSLGEYLQKRECLKGLVVLMDIRHPMKDLDQQMIFWAIDSRIPVQVLLTKADKLKSGARKQTLLKIRKQVETFGGDVSVDVFSSLKGLGVDQLRAKLDTWFAPALAHLIEEDDLEMPESNEE.

One can recognise an EngB-type G domain in the interval 26–200 (EGVEIAFAGR…RAKLDTWFAP (175 aa)). Residues 34 to 41 (GRSNAGKS), 61 to 65 (GRTQL), 79 to 82 (DLPG), 146 to 149 (TKAD), and 179 to 181 (FSS) each bind GTP. Mg(2+)-binding residues include Ser-41 and Thr-63.

The protein belongs to the TRAFAC class TrmE-Era-EngA-EngB-Septin-like GTPase superfamily. EngB GTPase family. Mg(2+) serves as cofactor.

Its function is as follows. Necessary for normal cell division and for the maintenance of normal septation. This chain is Probable GTP-binding protein EngB, found in Vibrio parahaemolyticus serotype O3:K6 (strain RIMD 2210633).